The chain runs to 62 residues: Photosystem II reaction center protein Z (62 aa).

Transmembrane regions (helical) follow at residues 8–28 (AVFA…VVFA) and 41–61 (FSGT…NSLI).

It belongs to the PsbZ family. PSII is composed of 1 copy each of membrane proteins PsbA, PsbB, PsbC, PsbD, PsbE, PsbF, PsbH, PsbI, PsbJ, PsbK, PsbL, PsbM, PsbT, PsbY, PsbZ, Psb30/Ycf12, at least 3 peripheral proteins of the oxygen-evolving complex and a large number of cofactors. It forms dimeric complexes.

It localises to the plastid. Its subcellular location is the chloroplast thylakoid membrane. Its function is as follows. May control the interaction of photosystem II (PSII) cores with the light-harvesting antenna, regulates electron flow through the 2 photosystem reaction centers. PSII is a light-driven water plastoquinone oxidoreductase, using light energy to abstract electrons from H(2)O, generating a proton gradient subsequently used for ATP formation. This Morus indica (Mulberry) protein is Photosystem II reaction center protein Z.